Consider the following 257-residue polypeptide: Serine/arginine-rich splicing factor 1 (257 aa).

Position 2 is an N-acetylserine (serine 2). Positions 16-91 constitute an RRM 1 domain; it reads CRIYVGNLPP…YRLRVEFPRS (76 aa). A disordered region spans residues 88–116; that stretch reads FPRSGRGTGRGGGGGGGGGAPRGRYGPPS. Residues 93–108 show a composition bias toward gly residues; it reads RGTGRGGGGGGGGGAP. The region spanning 121–195 is the RRM 2 domain; the sequence is YRVIVSGLPP…ETAYIRVKVD (75 aa).

Its subcellular location is the cytoplasm. The protein resides in the nucleus speckle. In terms of biological role, may play a role in preventing exon skipping, ensuring the accuracy of splicing and regulating alternative splicing. The sequence is that of Serine/arginine-rich splicing factor 1 (SRSF1) from Gallus gallus (Chicken).